The primary structure comprises 319 residues: Aspartate carbamoyltransferase catalytic subunit (319 aa).

Carbamoyl phosphate is bound by residues Arg65 and Thr66. An L-aspartate-binding site is contributed by Lys93. Carbamoyl phosphate contacts are provided by Arg115, His149, and Gln152. Residues Arg182 and Arg237 each coordinate L-aspartate. Carbamoyl phosphate-binding residues include Gly278 and Pro279.

The protein belongs to the aspartate/ornithine carbamoyltransferase superfamily. ATCase family. As to quaternary structure, heterododecamer (2C3:3R2) of six catalytic PyrB chains organized as two trimers (C3), and six regulatory PyrI chains organized as three dimers (R2).

The catalysed reaction is carbamoyl phosphate + L-aspartate = N-carbamoyl-L-aspartate + phosphate + H(+). It functions in the pathway pyrimidine metabolism; UMP biosynthesis via de novo pathway; (S)-dihydroorotate from bicarbonate: step 2/3. Its function is as follows. Catalyzes the condensation of carbamoyl phosphate and aspartate to form carbamoyl aspartate and inorganic phosphate, the committed step in the de novo pyrimidine nucleotide biosynthesis pathway. This is Aspartate carbamoyltransferase catalytic subunit from Janthinobacterium sp. (strain Marseille) (Minibacterium massiliensis).